The chain runs to 657 residues: Splicing factor Cactin (657 aa).

Over residues 1-15 (MGKDSKKHKKERRRE) the composition is skewed to basic residues. Disordered stretches follow at residues 1 to 83 (MGKD…EDTL), 369 to 406 (QESE…ISKK), and 472 to 503 (ADVD…QGAS). Coiled-coil stretches lie at residues 23-77 (SDEE…RKDA) and 352-403 (RLQL…DEKI). Over residues 26–60 (ERLQKRLAEQRSLKKDEKRRQKEEMKKNESAEEKR) the composition is skewed to basic and acidic residues. Residues 61–72 (ARRMEKKMRKDA) are compositionally biased toward basic residues. Positions 389–401 (EEEEEEEEDEDDE) are enriched in acidic residues. A compositionally biased stretch (low complexity) spans 489 to 503 (PSSSAASSGAPQGAS).

Belongs to the CACTIN family. In terms of tissue distribution, expressed in pharynx, intestine, vulva and spermatheca (at protein level).

Its subcellular location is the nucleus. The protein resides in the cytoplasm. Its function is as follows. Plays a role in pre-mRNA splicing by facilitating excision of a subset of introns. Plays a role during early embryonic development. Required for the distal tip cell migration at the end of larval development and for gonad morphogenesis. In Caenorhabditis elegans, this protein is Splicing factor Cactin (cacn-1).